The sequence spans 492 residues: Probable cobyric acid synthase (492 aa).

One can recognise a GATase cobBQ-type domain in the interval 248-434 (PVRIAVVRLP…MHGLFQNPGA (187 aa)). The Nucleophile role is filled by Cys-327. His-426 is a catalytic residue.

The protein belongs to the CobB/CobQ family. CobQ subfamily.

Its pathway is cofactor biosynthesis; adenosylcobalamin biosynthesis. Its function is as follows. Catalyzes amidations at positions B, D, E, and G on adenosylcobyrinic A,C-diamide. NH(2) groups are provided by glutamine, and one molecule of ATP is hydrogenolyzed for each amidation. This chain is Probable cobyric acid synthase, found in Methanoculleus marisnigri (strain ATCC 35101 / DSM 1498 / JR1).